The sequence spans 1425 residues: Neuropathy target esterase sws (1425 aa).

The Lumenal segment spans residues 1–34 (MDVLEMLRASASGSYNTIFSDAWCQYVSKQITAT). Residues 35-55 (VYMYFALVMMSLLFIAWFLYF) form a helical membrane-spanning segment. The Cytoplasmic segment spans residues 56-1425 (KRMARLRLRD…RSSPNNETKN (1370 aa)). 174–301 (IFGHFEKPVF…IRVIQVIMIR (128 aa)) contacts a nucleoside 3',5'-cyclic phosphate. Polar residues-rich tracts occupy residues 332–348 (TMSG…SRQA) and 357–366 (SQMNLMQSAV). Residues 332 to 410 (TMSGPINSQT…NPDGSFHGTT (79 aa)) are disordered. Over residues 367–381 (SGTGSSGVSVTVTRP) the composition is skewed to low complexity. Phosphoserine occurs at positions 444 and 453. Residues 482 to 609 (ELGL…VVRR) and 598 to 727 (IVLD…HRFL) contribute to the a nucleoside 3',5'-cyclic phosphate site. In terms of domain architecture, PNPLA spans 952 to 1118 (LVLGGGGARG…VNNLPADVMH (167 aa)). A GXGXXG motif is present at residues 956-961 (GGGARG). The short motif at 983–987 (GVSIG) is the GXSXG element. The Nucleophile role is filled by S985. D1105 acts as the Proton acceptor in catalysis. A DGA/G motif is present at residues 1105–1107 (DGG). A Phosphoserine modification is found at S1160. The tract at residues 1330–1425 (LERKTDKSTQ…RSSPNNETKN (96 aa)) is disordered. Over residues 1337–1347 (STQSSPPSNSR) the composition is skewed to low complexity. Over residues 1348–1358 (SDMRGKEEARH) the composition is skewed to basic and acidic residues. Residues 1380–1403 (TKTQTGQEQELQQEQQDQGATAEQ) are compositionally biased toward low complexity. Over residues 1404-1416 (LVDKDKEENKENR) the composition is skewed to basic and acidic residues.

It belongs to the NTE family. In terms of assembly, interacts with Pka-C3; interaction inhibits the catalytic function of Pka-C3 and the esterase activity of sws. In terms of tissue distribution, isoform A and isoform B are expressed in the entire brain cortex; cortical cell bodies of adult brain. Sws and Pka-C3 are colocalized in all neurons.

The protein resides in the endoplasmic reticulum membrane. The catalysed reaction is a 1-acyl-sn-glycero-3-phosphocholine + H2O = sn-glycerol 3-phosphocholine + a fatty acid + H(+). Functionally, phospholipase B that deacylates intracellular phosphatidylcholine (PtdCho), generating glycerophosphocholine (GroPtdCho). This deacylation occurs at both sn-2 and sn-1 positions of PtdCho. Its specific chemical modification by certain organophosphorus (OP) compounds leads to distal axonopathy. Plays a role in the signaling mechanism between neurons and glia that regulates glia wrapping during development of the adult brain. Essential for membrane lipid homeostasis and cell survival in both neurons and glia of the adult brain. This chain is Neuropathy target esterase sws (sws), found in Drosophila melanogaster (Fruit fly).